The chain runs to 352 residues: Protein MGF 360-16R (352 aa).

Belongs to the asfivirus MGF 360 family.

In terms of biological role, plays a role in virus cell tropism, and may be required for efficient virus replication in macrophages. This chain is Protein MGF 360-16R, found in African swine fever virus (isolate Warthog/Namibia/Wart80/1980) (ASFV).